A 308-amino-acid chain; its full sequence is Glutaminase (308 aa).

Positions 66, 117, 161, 168, 192, 244, and 262 each coordinate substrate.

Belongs to the glutaminase family. Homotetramer.

The catalysed reaction is L-glutamine + H2O = L-glutamate + NH4(+). This Salmonella arizonae (strain ATCC BAA-731 / CDC346-86 / RSK2980) protein is Glutaminase.